The sequence spans 1152 residues: Alpha-mannosidase 2x (1152 aa).

Residues 1–5 (MKLKK) are Cytoplasmic-facing. Residues 6–26 (QVTVCGAAIFCVAVFSLYLML) traverse the membrane as a helical; Signal-anchor for type II membrane protein segment. Over 27–796 (DRVQHDPARH…VDEEQEQQME (770 aa)) the chain is Lumenal. The stretch at 43-74 (PRSQISVLQNRIEQLEQLLEENHDIISRIKDS) forms a coiled coil. Residues histidine 175 and aspartate 177 each coordinate Zn(2+). N-linked (GlcNAc...) asparagine glycosylation occurs at asparagine 225. Aspartate 289 provides a ligand contact to Zn(2+). Aspartate 289 serves as the catalytic Nucleophile. An N-linked (GlcNAc...) asparagine glycan is attached at asparagine 305. Histidine 569 serves as a coordination point for Zn(2+).

This sequence belongs to the glycosyl hydrolase 38 family. As to quaternary structure, homodimer; disulfide-linked. Interacts with MGAT4D. Requires Zn(2+) as cofactor.

The protein localises to the golgi apparatus membrane. It carries out the reaction N(4)-{beta-D-GlcNAc-(1-&gt;2)-alpha-D-Man-(1-&gt;3)-[alpha-D-Man-(1-&gt;3)-[alpha-D-Man-(1-&gt;6)]-alpha-D-Man-(1-&gt;6)]-beta-D-Man-(1-&gt;4)-beta-D-GlcNAc-(1-&gt;4)-beta-D-GlcNAc}-L-asparaginyl-[protein] + 2 H2O = 2 alpha-D-mannopyranose + an N(4)-{beta-D-GlcNAc-(1-&gt;2)-alpha-D-Man-(1-&gt;3)-[alpha-D-Man-(1-&gt;6)]-beta-D-Man-(1-&gt;4)-beta-D-GlcNAc-(1-&gt;4)-beta-D-GlcNAc}-L-asparaginyl-[protein]. Its pathway is protein modification; protein glycosylation. In terms of biological role, catalyzes the first committed step in the biosynthesis of complex N-glycans. It controls conversion of high mannose to complex N-glycans; the final hydrolytic step in the N-glycan maturation pathway. The polypeptide is Alpha-mannosidase 2x (Man2a2) (Mus musculus (Mouse)).